A 208-amino-acid chain; its full sequence is Urease accessory protein UreG 1 (208 aa).

14-21 is a GTP binding site; that stretch reads GPVGSGKT.

The protein belongs to the SIMIBI class G3E GTPase family. UreG subfamily. In terms of assembly, homodimer. UreD, UreF and UreG form a complex that acts as a GTP-hydrolysis-dependent molecular chaperone, activating the urease apoprotein by helping to assemble the nickel containing metallocenter of UreC. The UreE protein probably delivers the nickel.

It is found in the cytoplasm. Facilitates the functional incorporation of the urease nickel metallocenter. This process requires GTP hydrolysis, probably effectuated by UreG. This is Urease accessory protein UreG 1 from Brucella ovis (strain ATCC 25840 / 63/290 / NCTC 10512).